A 386-amino-acid polypeptide reads, in one-letter code: Phosphoglycerate kinase (386 aa).

Substrate is bound by residues 21 to 23, R36, 59 to 62, R113, and R146; these read DLN and HLGR. Residues K197, E314, and 340–343 contribute to the ATP site; that span reads GGDT.

It belongs to the phosphoglycerate kinase family. In terms of assembly, monomer.

It localises to the cytoplasm. The catalysed reaction is (2R)-3-phosphoglycerate + ATP = (2R)-3-phospho-glyceroyl phosphate + ADP. The protein operates within carbohydrate degradation; glycolysis; pyruvate from D-glyceraldehyde 3-phosphate: step 2/5. The sequence is that of Phosphoglycerate kinase from Vibrio campbellii (strain ATCC BAA-1116).